The primary structure comprises 342 residues: Ribosomal RNA small subunit methyltransferase H (342 aa).

S-adenosyl-L-methionine is bound by residues 36–38, D56, F82, D100, and Q107; that span reads GGH. Positions 311-342 are disordered; the sequence is GESGMGKGNSAAASRFPTADSPFPASANGDAA.

The protein belongs to the methyltransferase superfamily. RsmH family.

The protein localises to the cytoplasm. It catalyses the reaction cytidine(1402) in 16S rRNA + S-adenosyl-L-methionine = N(4)-methylcytidine(1402) in 16S rRNA + S-adenosyl-L-homocysteine + H(+). Its function is as follows. Specifically methylates the N4 position of cytidine in position 1402 (C1402) of 16S rRNA. This Xanthomonas axonopodis pv. citri (strain 306) protein is Ribosomal RNA small subunit methyltransferase H.